Reading from the N-terminus, the 339-residue chain is Geranylgeranyl pyrophosphate synthase AN1592 (339 aa).

Isopentenyl diphosphate is bound by residues lysine 41, arginine 44, and histidine 73. The Mg(2+) site is built by aspartate 80 and aspartate 84. Arginine 89 provides a ligand contact to dimethylallyl diphosphate. Isopentenyl diphosphate is bound at residue arginine 90. Positions 192, 193, and 228 each coordinate dimethylallyl diphosphate. Aspartate 231 contributes to the Mg(2+) binding site. Positions 235, 245, and 255 each coordinate dimethylallyl diphosphate.

Belongs to the FPP/GGPP synthase family. Mg(2+) is required as a cofactor.

It carries out the reaction isopentenyl diphosphate + dimethylallyl diphosphate = (2E)-geranyl diphosphate + diphosphate. The catalysed reaction is isopentenyl diphosphate + (2E)-geranyl diphosphate = (2E,6E)-farnesyl diphosphate + diphosphate. The enzyme catalyses isopentenyl diphosphate + (2E,6E)-farnesyl diphosphate = (2E,6E,10E)-geranylgeranyl diphosphate + diphosphate. It functions in the pathway secondary metabolite biosynthesis. In terms of biological role, geranylgeranyl pyrophosphate synthase; part of the gene cluster that mediates the biosynthesis of erinacines, cyathane-xylosides that show unique biological activities, including leishmanicidal activity, stimulating activity for nerve growth-factor synthesis, and agonistic activity toward the kappa opioid receptor. The geranylgeranyl diphosphate (GGPP) synthase eriE catalyzes the first step in erinacines biosynthesis via conversion of farnesyl pyrophosphate and isopentyl pyrophosphate into geranylgeranyl pyrophosphate (GGPP). GGPP is then substrate of the diterpene cyclase eriG for the production of cyatha-3,12-diene. The cytochrome P450 monooxygenase eriI then hydroxylates cyatha-3,12-diene at C-14 of the seven-membered ring to produce erinacol, which is further hydroxylated at C-15 by the cytochrome P450 monooxygenase eriC to yield cyathadiol. The cytochrome P450 monooxygenase eriA then catalyzes C-11 hydroxylation in the presence of the short chain dehydrogenase/reductase (SDR) eriH, which leads to the production of cyathatriol. The acetyltransferase eriL converts cyathatriol into 11-O-acetyl-cyathatriol. The SDR eriH catalyzes further oxidation of 11-O-acetyl-cyathatriol into 1-O-acetylcyathin A3. Finally, the glycosyl transferase eriJ tranfers xylose from UDP-xylose onto C-14 of 11-O-acetyl-cyathatriol to form eracine Q. EriJ is also able to convert 11-O-acetyl-cyathatriol to eracine Q2 by using UDP-D-glucose as cosubstrate, but at a lower rate. In the absence of eriL and eriJ, the SDR eriH is able to convert cyathatriol to cyathin A3; this is likely a switching mechanism in the biosynthesis of cyathins (C-14 ketogroup)and erinacines (C-14 glycosylated group). The roles of the SDR eriB, the polyprenyl transferase eriF and the dehydrogenase eriK have still to be identified. The polypeptide is Geranylgeranyl pyrophosphate synthase AN1592 (Hericium erinaceus (Lion's mane mushroom)).